Here is a 58-residue protein sequence, read N- to C-terminus: Small ribosomal subunit protein bS21 (58 aa).

The segment at 35-58 (REHYEKPSVKKKKKSEAARKRKFK) is disordered. The span at 43-58 (VKKKKKSEAARKRKFK) shows a compositional bias: basic residues.

The protein belongs to the bacterial ribosomal protein bS21 family.

This chain is Small ribosomal subunit protein bS21, found in Clostridium botulinum (strain Alaska E43 / Type E3).